Here is a 380-residue protein sequence, read N- to C-terminus: MTSLPLTPVNLDAPARRAAMPPRHLADLDLAGRQALVAELGEPRFRARQVSTHYFGRLVRDSGQMTDLPAAAREKLTDRLLPTLLTPVRELTCDDGATHKALWRLHDGSLVESVLMGYPDRVTACLSSQAGCGMACPFCATGQAGLTRNLSTAEIVDQAVYLAGVAASGAVAGSPPRLSRVVFMGMGEPLANYNRVVAAIRRLVAPAPEGLGLSQRHVTVSTVGLVPAIRRLASEDLSVTLALSLHAPDDGLRDELVPVNQRWKVSEVLETAWEYAARTGRRVSIEYAMIKDVNDQPWRADLLGRLLAGKLAHVNLIPLNPTPGSRWDASPKPVEREFVRRLRDAGVSTTVRDTRGREIDGACGQLAAAEGDEIVGPGAP.

Glu-112 functions as the Proton acceptor in the catalytic mechanism. The 241-residue stretch at 118–358 folds into the Radical SAM core domain; that stretch reads YPDRVTACLS…TTVRDTRGRE (241 aa). The cysteines at positions 125 and 363 are disulfide-linked. Residues Cys-132, Cys-136, and Cys-139 each coordinate [4Fe-4S] cluster. S-adenosyl-L-methionine-binding positions include 187-188, Ser-221, 244-246, and Asn-320; these read GE and SLH. The S-methylcysteine intermediate role is filled by Cys-363.

This sequence belongs to the radical SAM superfamily. RlmN family. It depends on [4Fe-4S] cluster as a cofactor.

It localises to the cytoplasm. It catalyses the reaction adenosine(2503) in 23S rRNA + 2 reduced [2Fe-2S]-[ferredoxin] + 2 S-adenosyl-L-methionine = 2-methyladenosine(2503) in 23S rRNA + 5'-deoxyadenosine + L-methionine + 2 oxidized [2Fe-2S]-[ferredoxin] + S-adenosyl-L-homocysteine. It carries out the reaction adenosine(37) in tRNA + 2 reduced [2Fe-2S]-[ferredoxin] + 2 S-adenosyl-L-methionine = 2-methyladenosine(37) in tRNA + 5'-deoxyadenosine + L-methionine + 2 oxidized [2Fe-2S]-[ferredoxin] + S-adenosyl-L-homocysteine. Its function is as follows. Specifically methylates position 2 of adenine 2503 in 23S rRNA and position 2 of adenine 37 in tRNAs. This chain is Probable dual-specificity RNA methyltransferase RlmN, found in Salinispora arenicola (strain CNS-205).